Here is a 347-residue protein sequence, read N- to C-terminus: NADH-ubiquinone oxidoreductase chain 2 (347 aa).

Helical transmembrane passes span 4–21, 26–45, 59–79, 96–116, 122–142, 148–168, 201–221, 242–262, 274–294, and 326–346; these read LILS…LIVM, WLMV…PVLM, YFLT…INLI, IIMT…FWVP, IQLS…MSIL, AINM…GGWG, ALLN…TFML, TTIL…GFLP, DSII…YFYM, and LPPL…LMLL.

The protein belongs to the complex I subunit 2 family. In terms of assembly, core subunit of respiratory chain NADH dehydrogenase (Complex I) which is composed of 45 different subunits. Interacts with TMEM242.

Its subcellular location is the mitochondrion inner membrane. It catalyses the reaction a ubiquinone + NADH + 5 H(+)(in) = a ubiquinol + NAD(+) + 4 H(+)(out). In terms of biological role, core subunit of the mitochondrial membrane respiratory chain NADH dehydrogenase (Complex I) which catalyzes electron transfer from NADH through the respiratory chain, using ubiquinone as an electron acceptor. Essential for the catalytic activity and assembly of complex I. This Syconycteris australis (Southern blossom bat) protein is NADH-ubiquinone oxidoreductase chain 2.